A 178-amino-acid polypeptide reads, in one-letter code: Conodipine-P1 (178 aa).

The N-terminal stretch at 1–24 (MKLLAPVLWAMAALGVTWLVAVDS) is a signal peptide. P38, P42, and P49 each carry 4-hydroxyproline; partial. H54 is a catalytic residue. A propeptide spans 98 to 130 (KREVTSHRATSIAHSRLWKTALDQKSFLNRKAR) (interchain peptide). Residue Q131 is modified to Pyrrolidone carboxylic acid. P137 bears the 4-hydroxyproline; partial mark.

Belongs to the phospholipase A2 family. Group IX subfamily. Heterodimer of an alpha and a beta chain; probably disulfide-linked. Requires Ca(2+) as cofactor. Expressed by the venom duct.

It is found in the secreted. It catalyses the reaction a 1,2-diacyl-sn-glycero-3-phosphocholine + H2O = a 1-acyl-sn-glycero-3-phosphocholine + a fatty acid + H(+). Its function is as follows. Catalyzes the calcium-dependent hydrolysis of the 2-acyl groups in 3-sn-phosphoglycerides. This Conus purpurascens (Purple cone) protein is Conodipine-P1.